The chain runs to 138 residues: Large ribosomal subunit protein uL16 (138 aa).

Positions 1 to 21 (MLIPRKVKHRKQHHPSLRGRA) are enriched in basic residues. The interval 1-22 (MLIPRKVKHRKQHHPSLRGRAK) is disordered.

The protein belongs to the universal ribosomal protein uL16 family. As to quaternary structure, part of the 50S ribosomal subunit.

Functionally, binds 23S rRNA and is also seen to make contacts with the A and possibly P site tRNAs. This chain is Large ribosomal subunit protein uL16, found in Thermobifida fusca (strain YX).